Here is a 258-residue protein sequence, read N- to C-terminus: Adenosylcobinamide-GDP ribazoletransferase (258 aa).

6 helical membrane-spanning segments follow: residues 41 to 61, 65 to 85, 115 to 135, 136 to 156, 197 to 217, and 236 to 256; these read FFPL…WLAS, PAPG…TGAF, IGAF…QLLM, AMAA…HAAS, LPLL…LLAA, and CLGL…LAWT.

It belongs to the CobS family. Requires Mg(2+) as cofactor.

It localises to the cell inner membrane. The enzyme catalyses alpha-ribazole + adenosylcob(III)inamide-GDP = adenosylcob(III)alamin + GMP + H(+). It carries out the reaction alpha-ribazole 5'-phosphate + adenosylcob(III)inamide-GDP = adenosylcob(III)alamin 5'-phosphate + GMP + H(+). It participates in cofactor biosynthesis; adenosylcobalamin biosynthesis; adenosylcobalamin from cob(II)yrinate a,c-diamide: step 7/7. Joins adenosylcobinamide-GDP and alpha-ribazole to generate adenosylcobalamin (Ado-cobalamin). Also synthesizes adenosylcobalamin 5'-phosphate from adenosylcobinamide-GDP and alpha-ribazole 5'-phosphate. The sequence is that of Adenosylcobinamide-GDP ribazoletransferase from Ralstonia nicotianae (strain ATCC BAA-1114 / GMI1000) (Ralstonia solanacearum).